A 407-amino-acid chain; its full sequence is Carbamoyl phosphate synthase small chain (407 aa).

Residues 1 to 203 (MSQNESGTIA…EPCGEYEGKE (203 aa)) are CPSase. The L-glutamine site is built by Ser-61, Gly-255, and Gly-257. In terms of domain architecture, Glutamine amidotransferase type-1 spans 207-405 (TVAAVDLGIK…CELMKNNSKE (199 aa)). The Nucleophile role is filled by Cys-283. Residues Phe-284, Gln-287, Asn-325, Gly-327, and Phe-328 each coordinate L-glutamine. Catalysis depends on residues His-378 and Glu-380.

Belongs to the CarA family. Composed of two chains; the small (or glutamine) chain promotes the hydrolysis of glutamine to ammonia, which is used by the large (or ammonia) chain to synthesize carbamoyl phosphate. Tetramer of heterodimers (alpha,beta)4.

It carries out the reaction hydrogencarbonate + L-glutamine + 2 ATP + H2O = carbamoyl phosphate + L-glutamate + 2 ADP + phosphate + 2 H(+). It catalyses the reaction L-glutamine + H2O = L-glutamate + NH4(+). The protein operates within amino-acid biosynthesis; L-arginine biosynthesis; carbamoyl phosphate from bicarbonate: step 1/1. Its pathway is pyrimidine metabolism; UMP biosynthesis via de novo pathway; (S)-dihydroorotate from bicarbonate: step 1/3. In terms of biological role, small subunit of the glutamine-dependent carbamoyl phosphate synthetase (CPSase). CPSase catalyzes the formation of carbamoyl phosphate from the ammonia moiety of glutamine, carbonate, and phosphate donated by ATP, constituting the first step of 2 biosynthetic pathways, one leading to arginine and/or urea and the other to pyrimidine nucleotides. The small subunit (glutamine amidotransferase) binds and cleaves glutamine to supply the large subunit with the substrate ammonia. The polypeptide is Carbamoyl phosphate synthase small chain (Bifidobacterium longum (strain DJO10A)).